A 138-amino-acid chain; its full sequence is MRILWIVAVCLIGVEGSVIEFGKMIQEETDKNPLTSYSFYGCHCGLGNKGKPKDATDRCCFVHSCCYAKLPDCSPKTNRYEYHRENGAIVCGSSTPCKKQICECDRAAAICFRENLKTYNKKYKVYLRFKCKGVSEKC.

The N-terminal stretch at 1–16 (MRILWIVAVCLIGVEG) is a signal peptide. 7 disulfides stabilise this stretch: C42–C131, C44–C60, C59–C111, C65–C138, C66–C104, C73–C97, and C91–C102. The tract at residues 121 to 133 (KKYKVYLRFKCKG) is important for membrane-damaging activities in eukaryotes and bacteria; heparin-binding.

The protein belongs to the phospholipase A2 family. Group II subfamily. S49 sub-subfamily. In terms of tissue distribution, expressed by the venom gland.

The protein resides in the secreted. Functionally, snake venom phospholipase A2 homolog that lacks enzymatic activity. Is very active in inducing myonecrosis in vivo and shows a potent calcium-independent membrane-damaging activity in vitro, most probably by binding and incorporating in the membrane. Also acts as a presynaptic neurotoxin. A model of myotoxic mechanism has been proposed: an apo Lys49-PLA2 is activated by the entrance of a hydrophobic molecule (e.g. fatty acid) at the hydrophobic channel of the protein leading to a reorientation of a monomer. This reorientation causes a transition between 'inactive' to 'active' states, causing alignment of C-terminal and membrane-docking sites (MDoS) side-by-side and putting the membrane-disruption sites (MDiS) in the same plane, exposed to solvent and in a symmetric position for both monomers. The MDoS region stabilizes the toxin on membrane by the interaction of charged residues with phospholipid head groups. Subsequently, the MDiS region destabilizes the membrane with penetration of hydrophobic residues. This insertion causes a disorganization of the membrane, allowing an uncontrolled influx of ions (i.e. calcium and sodium), and eventually triggering irreversible intracellular alterations and cell death. The sequence is that of Basic phospholipase A2 homolog ammodytin L from Vipera ammodytes ammodytes (Western sand viper).